A 54-amino-acid chain; its full sequence is UPF0391 membrane protein BAB1_1670 (54 aa).

2 consecutive transmembrane segments (helical) span residues 5-25 (VLVFLVVALVAGALGFGGIAG) and 29-48 (GIAQILFFVFLALLVISLIA).

It belongs to the UPF0391 family.

The protein resides in the cell membrane. The protein is UPF0391 membrane protein BAB1_1670 of Brucella abortus (strain 2308).